Consider the following 118-residue polypeptide: Large ribosomal subunit protein bL19 (118 aa).

This sequence belongs to the bacterial ribosomal protein bL19 family.

This protein is located at the 30S-50S ribosomal subunit interface and may play a role in the structure and function of the aminoacyl-tRNA binding site. This chain is Large ribosomal subunit protein bL19, found in Salinispora arenicola (strain CNS-205).